The primary structure comprises 728 residues: Fibulin-1 (728 aa).

The N-terminal stretch at 1–17 is a signal peptide; the sequence is MRICFLLLAFLVAETFA. Disulfide bonds link Cys-23–Cys-49, Cys-24–Cys-56, Cys-37–Cys-57, Cys-66–Cys-94, Cys-79–Cys-95, Cys-97–Cys-121, Cys-98–Cys-128, Cys-111–Cys-129, Cys-159–Cys-168, Cys-164–Cys-178, Cys-180–Cys-279, Cys-285–Cys-298, Cys-292–Cys-307, Cys-347–Cys-359, Cys-353–Cys-368, Cys-375–Cys-388, Cys-394–Cys-404, Cys-399–Cys-413, Cys-415–Cys-428, Cys-434–Cys-448, Cys-442–Cys-457, Cys-459–Cys-472, Cys-478–Cys-489, Cys-485–Cys-498, Cys-500–Cys-513, Cys-519–Cys-534, Cys-530–Cys-543, Cys-545–Cys-558, Cys-564–Cys-576, and Cys-569–Cys-585. Anaphylatoxin-like domains lie at 23–64, 65–96, and 97–129; these read CCAG…LLDN, ACDS…ECCD, and CCLL…NKCC. The EGF-like 1 domain maps to 155–194; it reads LGDRCASSHCEHLCHDRGGEKVECSCRSGFDLAPDGMACV. One can recognise an EGF-like 2; calcium-binding domain in the interval 195–280; it reads DRNECLTRQS…GWLFQHGHCV (86 aa). The 64-residue stretch at 281–344 folds into the EGF-like 3; calcium-binding domain; that stretch reads DVDECNLGSH…YPKNGMCNDI (64 aa). One can recognise an EGF-like 4; calcium-binding domain in the interval 343–389; that stretch reads DIDECVTGHNCGAGEECVNTPGSFRCQQKGNLCAHGYEVNGATGFCE. The EGF-like 5; calcium-binding domain maps to 390–429; sequence DVNECQQGVCGSMECINLPGTYKCKCGPGYEFNDAKKRCE. The 44-residue stretch at 430 to 473 folds into the EGF-like 6; calcium-binding domain; it reads DVDECIKFAGHVCDLSAECINTIGSFECKCKPGFQLASDGRRCE. An EGF-like 7; calcium-binding domain is found at 474–514; it reads DVNECTTGIAACEQKCVNIPGSYQCICDRGFALGPDGTKCE. One can recognise an EGF-like 8; calcium-binding domain in the interval 515–559; the sequence is DIDECSIWAGSGNDLCMGGCINTKGSYLCQCPPGYKIQPDGRTCV. Residues 560-610 form the EGF-like 9; calcium-binding domain; the sequence is DVDECAMGECAGSDKVCVNTLGSFKCHSIDCPTNYIHDSLNKNQIADGYSC. Asn-624 carries an N-linked (GlcNAc...) asparagine glycan.

It belongs to the fibulin family. Homomultimerizes and interacts with various extracellular matrix components. Expressed in head muscle cells, anterior and posterior intestinal cells. Isoform a: Expressed in male and hermaphrodite gonad, anterior and posterior intestine and pharyngeal basement membranes, body-wall muscle, GLR cells, uterine attachment and mechanosensory neurons. Isoform c: Expressed on ALM/PLM mechanosensory neuron attachments, in flexible tracks connecting the pharyngeal, body-wall-muscle basement membranes and in uterine attachments.

The protein resides in the secreted. Its subcellular location is the extracellular space. It localises to the extracellular matrix. The protein localises to the basement membrane. In terms of biological role, incorporated into fibronectin-containing matrix fibers. Plays a role in cell adhesion and migration along protein fibers within the extracellular matrix (ECM). Important for certain developmental processes and contributes to the supramolecular organization of ECM architecture, in particular to those of basement membranes. Involved in regulating the shape and adhesion of cells in the developing pharynx, intestine, body-wall muscle and gonadal tissue. During gonadogenesis, regulates the width of gonads and the migration of distal tip cells (DTC). Together with type IV collagen let-2 and downstream of metalloprotease mig-17, recruits nidogen nid-1 to the gonad basement membrane thereby inducing basement membrane remodeling required for the directional migration of DTCs. Acts antagonistically with metalloprotease gon-1 to maintain optimal levels of type IV collagen emb-9 in the gonad basement membrane during gonadogenesis. Required for larval development. Functionally, involved in the assembly of the flexible hemicentin-containing tracks found joining the pharynx and body-wall-muscle basement membranes. In Caenorhabditis elegans, this protein is Fibulin-1 (fbl-1).